Here is a 159-residue protein sequence, read N- to C-terminus: MIAVLQRVSEARVLIEGQIVGEIGAGLLLLLCAERGDSETESDKLLSKVLKLRIFSDAAGKMNHSLQDMDGRGTAGGLLVVSQFTLAADVSGGNRPGFTLAAAPAQGRRLYDHFVAQARRAHPVVRTGQFGADMQVHLVNDGPVTIPLRMAPPAGVAPE.

The short motif at 142-143 is the Gly-cisPro motif, important for rejection of L-amino acids element; the sequence is GP.

The protein belongs to the DTD family. In terms of assembly, homodimer.

The protein resides in the cytoplasm. The catalysed reaction is glycyl-tRNA(Ala) + H2O = tRNA(Ala) + glycine + H(+). It carries out the reaction a D-aminoacyl-tRNA + H2O = a tRNA + a D-alpha-amino acid + H(+). Its function is as follows. An aminoacyl-tRNA editing enzyme that deacylates mischarged D-aminoacyl-tRNAs. Also deacylates mischarged glycyl-tRNA(Ala), protecting cells against glycine mischarging by AlaRS. Acts via tRNA-based rather than protein-based catalysis; rejects L-amino acids rather than detecting D-amino acids in the active site. By recycling D-aminoacyl-tRNA to D-amino acids and free tRNA molecules, this enzyme counteracts the toxicity associated with the formation of D-aminoacyl-tRNA entities in vivo and helps enforce protein L-homochirality. The sequence is that of D-aminoacyl-tRNA deacylase from Albidiferax ferrireducens (strain ATCC BAA-621 / DSM 15236 / T118) (Rhodoferax ferrireducens).